The following is a 467-amino-acid chain: Ergochrome gene cluster transcriptional coactivator CPUR_05432 (467 aa).

Residues 109-179 (IAIQCEMLGS…RRGYVAHTPL (71 aa)) enclose the HTH iclR-type domain. Positions 139 to 158 (IQDVANLSNVPEQQLAQMIG) form a DNA-binding region, H-T-H motif.

The protein localises to the nucleus. Transcriptional coactivator; part of the gene cluster responsible for the typical purple-black color of the ergot sclerotia. The ergochrome gene cluster produces several ergot pigments including the yellow ergochrome secalonic acid and its derivatives, as well as the red anthraquinones endocrocin and clavorubin. With CPUR_05433, coregulates the production of geodin. The sequence is that of Ergochrome gene cluster transcriptional coactivator CPUR_05432 from Claviceps purpurea (strain 20.1) (Ergot fungus).